We begin with the raw amino-acid sequence, 651 residues long: Threonine--tRNA ligase (651 aa).

One can recognise a TGS domain in the interval 1–61 (MPTIQLPDGS…DKDVSLRIIT (61 aa)). Residues 242-533 (DHRLLAKKMD…LLEESAGKLP (292 aa)) are catalytic. 3 residues coordinate Zn(2+): cysteine 333, histidine 384, and histidine 510. Positions 631–651 (ISQRSRKSPAPSPLFPVGGES) are disordered.

Belongs to the class-II aminoacyl-tRNA synthetase family. In terms of assembly, homodimer. Requires Zn(2+) as cofactor.

It localises to the cytoplasm. It catalyses the reaction tRNA(Thr) + L-threonine + ATP = L-threonyl-tRNA(Thr) + AMP + diphosphate + H(+). Functionally, catalyzes the attachment of threonine to tRNA(Thr) in a two-step reaction: L-threonine is first activated by ATP to form Thr-AMP and then transferred to the acceptor end of tRNA(Thr). Also edits incorrectly charged L-seryl-tRNA(Thr). The protein is Threonine--tRNA ligase of Coxiella burnetii (strain RSA 493 / Nine Mile phase I).